The primary structure comprises 352 residues: Uroporphyrinogen decarboxylase (352 aa).

Substrate-binding positions include 26-30 (RQAGR), Asp-76, Tyr-153, Ser-208, and His-323.

Belongs to the uroporphyrinogen decarboxylase family. As to quaternary structure, homodimer.

It is found in the cytoplasm. The catalysed reaction is uroporphyrinogen III + 4 H(+) = coproporphyrinogen III + 4 CO2. It functions in the pathway porphyrin-containing compound metabolism; protoporphyrin-IX biosynthesis; coproporphyrinogen-III from 5-aminolevulinate: step 4/4. Functionally, catalyzes the decarboxylation of four acetate groups of uroporphyrinogen-III to yield coproporphyrinogen-III. The chain is Uroporphyrinogen decarboxylase from Synechococcus sp. (strain CC9605).